A 324-amino-acid chain; its full sequence is Glyoxylate/hydroxypyruvate reductase B (324 aa).

Active-site residues include R237 and E266. H285 serves as the catalytic Proton donor.

This sequence belongs to the D-isomer specific 2-hydroxyacid dehydrogenase family. GhrB subfamily. As to quaternary structure, homodimer.

The protein localises to the cytoplasm. The catalysed reaction is glycolate + NADP(+) = glyoxylate + NADPH + H(+). It carries out the reaction (R)-glycerate + NAD(+) = 3-hydroxypyruvate + NADH + H(+). The enzyme catalyses (R)-glycerate + NADP(+) = 3-hydroxypyruvate + NADPH + H(+). Functionally, catalyzes the NADPH-dependent reduction of glyoxylate and hydroxypyruvate into glycolate and glycerate, respectively. The protein is Glyoxylate/hydroxypyruvate reductase B of Salmonella dublin (strain CT_02021853).